Here is a 387-residue protein sequence, read N- to C-terminus: S-adenosylmethionine synthase (387 aa).

H15 is a binding site for ATP. D17 contributes to the Mg(2+) binding site. E43 contacts K(+). Residues E56 and Q99 each contribute to the L-methionine site. The tract at residues 99 to 109 (QSPDIAQGVNR) is flexible loop. ATP is bound by residues 166–168 (DAK), 232–233 (RF), D241, 247–248 (RK), A264, and K268. D241 contributes to the L-methionine binding site. K272 contributes to the L-methionine binding site.

Belongs to the AdoMet synthase family. Homotetramer; dimer of dimers. Requires Mg(2+) as cofactor. K(+) serves as cofactor.

It is found in the cytoplasm. It catalyses the reaction L-methionine + ATP + H2O = S-adenosyl-L-methionine + phosphate + diphosphate. Its pathway is amino-acid biosynthesis; S-adenosyl-L-methionine biosynthesis; S-adenosyl-L-methionine from L-methionine: step 1/1. Its function is as follows. Catalyzes the formation of S-adenosylmethionine (AdoMet) from methionine and ATP. The overall synthetic reaction is composed of two sequential steps, AdoMet formation and the subsequent tripolyphosphate hydrolysis which occurs prior to release of AdoMet from the enzyme. The chain is S-adenosylmethionine synthase from Nitrosomonas europaea (strain ATCC 19718 / CIP 103999 / KCTC 2705 / NBRC 14298).